We begin with the raw amino-acid sequence, 255 residues long: Protein DOG1-like 2 (255 aa).

Positions 10 to 246 constitute a DOG1 domain; that stretch reads EKLQKRCYHE…HDRGRVRADV (237 aa).

This chain is Protein DOG1-like 2, found in Arabidopsis thaliana (Mouse-ear cress).